We begin with the raw amino-acid sequence, 217 residues long: External core antigen (217 aa).

The N-terminal stretch at 1–20 (MYLFHLCLVFACVSCPTVQA) is a signal peptide. Positions 26 to 28 (GWL) are HBEAG. Basic residues predominate over residues 181 to 210 (RRGSARVVRSPRRRTPSPRRRRSQSPRRRP). Residues 181 to 217 (RRGSARVVRSPRRRTPSPRRRRSQSPRRRPQSPASNC) are disordered. A 1; half-length repeat occupies 190–196 (SPRRRTP). A 3 X 8 AA approximate repeats of S-P-R-R-R-R-[PS]-Q region spans residues 190–211 (SPRRRTPSPRRRRSQSPRRRPQ). Positions 190-217 (SPRRRTPSPRRRRSQSPRRRPQSPASNC) are excised as a propeptide. A run of 2 repeats spans residues 197-204 (SPRRRRSQ) and 205-211 (SPRRRPQ).

It belongs to the orthohepadnavirus precore antigen family. As to quaternary structure, homodimerizes. Phosphorylated. Post-translationally, cleaved by host furin.

It localises to the secreted. The protein resides in the host nucleus. Functionally, may regulate immune response to the intracellular capsid in acting as a T-cell tolerogen, by having an immunoregulatory effect which prevents destruction of infected cells by cytotoxic T-cells. This immune regulation may predispose to chronicity during perinatal infections and prevent severe liver injury during adult infections. This chain is External core antigen, found in Urocitellus parryii kennicottii (ASHV).